Here is a 383-residue protein sequence, read N- to C-terminus: ATP phosphoribosyltransferase regulatory subunit (383 aa).

This sequence belongs to the class-II aminoacyl-tRNA synthetase family. HisZ subfamily. Heteromultimer composed of HisG and HisZ subunits.

It localises to the cytoplasm. It functions in the pathway amino-acid biosynthesis; L-histidine biosynthesis; L-histidine from 5-phospho-alpha-D-ribose 1-diphosphate: step 1/9. In terms of biological role, required for the first step of histidine biosynthesis. May allow the feedback regulation of ATP phosphoribosyltransferase activity by histidine. The sequence is that of ATP phosphoribosyltransferase regulatory subunit from Cupriavidus taiwanensis (strain DSM 17343 / BCRC 17206 / CCUG 44338 / CIP 107171 / LMG 19424 / R1) (Ralstonia taiwanensis (strain LMG 19424)).